Here is a 397-residue protein sequence, read N- to C-terminus: S-adenosylmethionine synthase (397 aa).

His-17 provides a ligand contact to ATP. Asp-19 is a binding site for Mg(2+). Position 45 (Glu-45) interacts with K(+). Residues Glu-58 and Gln-101 each contribute to the L-methionine site. Residues 101–111 (QSPDIAQGVDK) form a flexible loop region. Residues 176–178 (DGK), 243–244 (RF), Asp-252, 258–259 (RK), and Lys-279 contribute to the ATP site. Asp-252 provides a ligand contact to L-methionine. Lys-283 is a binding site for L-methionine.

Belongs to the AdoMet synthase family. As to quaternary structure, homotetramer; dimer of dimers. It depends on Mg(2+) as a cofactor. Requires K(+) as cofactor.

The protein localises to the cytoplasm. It catalyses the reaction L-methionine + ATP + H2O = S-adenosyl-L-methionine + phosphate + diphosphate. It functions in the pathway amino-acid biosynthesis; S-adenosyl-L-methionine biosynthesis; S-adenosyl-L-methionine from L-methionine: step 1/1. Functionally, catalyzes the formation of S-adenosylmethionine (AdoMet) from methionine and ATP. The overall synthetic reaction is composed of two sequential steps, AdoMet formation and the subsequent tripolyphosphate hydrolysis which occurs prior to release of AdoMet from the enzyme. This chain is S-adenosylmethionine synthase, found in Staphylococcus aureus.